The primary structure comprises 285 residues: Diaminopimelate epimerase (285 aa).

2 residues coordinate substrate: N14 and N67. The active-site Proton donor is the C76. Residues 77–78 (GN), N166, N199, and 217–218 (ER) contribute to the substrate site. The active-site Proton acceptor is the C226. 227–228 (GT) provides a ligand contact to substrate.

It belongs to the diaminopimelate epimerase family. As to quaternary structure, homodimer.

The protein resides in the cytoplasm. The enzyme catalyses (2S,6S)-2,6-diaminopimelate = meso-2,6-diaminopimelate. The protein operates within amino-acid biosynthesis; L-lysine biosynthesis via DAP pathway; DL-2,6-diaminopimelate from LL-2,6-diaminopimelate: step 1/1. Functionally, catalyzes the stereoinversion of LL-2,6-diaminopimelate (L,L-DAP) to meso-diaminopimelate (meso-DAP), a precursor of L-lysine and an essential component of the bacterial peptidoglycan. In Bacillus licheniformis (strain ATCC 14580 / DSM 13 / JCM 2505 / CCUG 7422 / NBRC 12200 / NCIMB 9375 / NCTC 10341 / NRRL NRS-1264 / Gibson 46), this protein is Diaminopimelate epimerase.